Consider the following 443-residue polypeptide: MKYLIGIDDHDSYKFGCTTHFSVILTSYLYKNHNTILLDLPYLVRLNPNIPWKTRGNASIKLIVDFNGTKKELADIIFSYSVKYVKNVSLALEHGRRPGIAIIEYDKYKSLFEKLYDFYIKGILDIIPIDYAKKFAEKNDIEIRGDRGIIGSIAALGMSGDYTYELITYRKKENWLKKRMINEDSVKRVDEETFPLTFANYDYINDSPLITPHGNDPILYGIRGTSIEHLIKAMELIESNEDINFFAVFKTNQNTDIHFQKVGNRFYQEIKKVIQIKNIKILEGGDVMIRTTDDDILFVYKETGELNSAAKLLKEGDEIVAYGAIKPSITYGKIIELERFEILKLNDLQLINPKCPICGGPTKSLGKNKGYKCKKCKYIINTANKSMKNIIRNLSLGIYQTRAYRHLTRPIFLTLENNNQSFHEERKFLDMYRSELYKLDYHL.

It belongs to the TiaS family.

It localises to the cytoplasm. It catalyses the reaction cytidine(34) in tRNA(Ile2) + agmatine + ATP + H2O = 2-agmatinylcytidine(34) in tRNA(Ile2) + AMP + 2 phosphate + 2 H(+). Functionally, ATP-dependent agmatine transferase that catalyzes the formation of 2-agmatinylcytidine (agm2C) at the wobble position (C34) of tRNA(Ile2), converting the codon specificity from AUG to AUA. This chain is tRNA(Ile2) 2-agmatinylcytidine synthetase TiaS, found in Saccharolobus islandicus (strain L.S.2.15 / Lassen #1) (Sulfolobus islandicus).